The following is a 144-amino-acid chain: Nucleoside diphosphate kinase (144 aa).

The ATP site is built by lysine 11, phenylalanine 59, arginine 87, threonine 93, arginine 104, and asparagine 114. Catalysis depends on histidine 117, which acts as the Pros-phosphohistidine intermediate.

The protein belongs to the NDK family. As to quaternary structure, homotetramer. Requires Mg(2+) as cofactor.

The protein resides in the cytoplasm. The catalysed reaction is a 2'-deoxyribonucleoside 5'-diphosphate + ATP = a 2'-deoxyribonucleoside 5'-triphosphate + ADP. The enzyme catalyses a ribonucleoside 5'-diphosphate + ATP = a ribonucleoside 5'-triphosphate + ADP. Functionally, major role in the synthesis of nucleoside triphosphates other than ATP. The ATP gamma phosphate is transferred to the NDP beta phosphate via a ping-pong mechanism, using a phosphorylated active-site intermediate. This Psychromonas ingrahamii (strain DSM 17664 / CCUG 51855 / 37) protein is Nucleoside diphosphate kinase.